A 292-amino-acid chain; its full sequence is Mycothiol acetyltransferase (292 aa).

2 N-acetyltransferase domains span residues 2-138 and 141-292; these read AEVV…PSAP and VTVR…YAHS. E33 contacts 1D-myo-inositol 2-(L-cysteinylamino)-2-deoxy-alpha-D-glucopyranoside. 68–70 is a binding site for acetyl-CoA; it reads AVV. Positions 168, 215, and 225 each coordinate 1D-myo-inositol 2-(L-cysteinylamino)-2-deoxy-alpha-D-glucopyranoside. Acetyl-CoA-binding positions include 229-231 and 236-242; these read VAV and QGRGLGR. Residue Y263 participates in 1D-myo-inositol 2-(L-cysteinylamino)-2-deoxy-alpha-D-glucopyranoside binding. Residue 268 to 273 participates in acetyl-CoA binding; sequence NAAALH.

This sequence belongs to the acetyltransferase family. MshD subfamily. Monomer.

The enzyme catalyses 1D-myo-inositol 2-(L-cysteinylamino)-2-deoxy-alpha-D-glucopyranoside + acetyl-CoA = mycothiol + CoA + H(+). Functionally, catalyzes the transfer of acetyl from acetyl-CoA to desacetylmycothiol (Cys-GlcN-Ins) to form mycothiol. The chain is Mycothiol acetyltransferase from Tsukamurella paurometabola (strain ATCC 8368 / DSM 20162 / CCUG 35730 / CIP 100753 / JCM 10117 / KCTC 9821 / NBRC 16120 / NCIMB 702349 / NCTC 13040) (Corynebacterium paurometabolum).